A 367-amino-acid chain; its full sequence is Ribosomal lysine N-methyltransferase 5 (367 aa).

A disordered region spans residues glutamate 55–glutamate 74. The segment covering arginine 58–lysine 68 has biased composition (basic residues). S-adenosyl-L-methionine contacts are provided by residues tryptophan 110, glycine 170–glycine 172, aspartate 192, tryptophan 256, and methionine 288.

It belongs to the class I-like SAM-binding methyltransferase superfamily. RKM5 family.

Functionally, S-adenosyl-L-methionine-dependent protein-lysine N-methyltransferase that monomethylates 60S ribosomal protein L1 (RPL1A and RPL1B) at 'Lys-46'. In Saccharomyces cerevisiae (strain AWRI796) (Baker's yeast), this protein is Ribosomal lysine N-methyltransferase 5 (RKM5).